We begin with the raw amino-acid sequence, 294 residues long: N-acetylmuramic acid 6-phosphate etherase (294 aa).

In terms of domain architecture, SIS spans 54 to 217 (VIKSFEEEGR…STASMIGVGK (164 aa)). Glu82 (proton donor) is an active-site residue. Residue Glu113 is part of the active site.

The protein belongs to the GCKR-like family. MurNAc-6-P etherase subfamily. Homodimer.

The catalysed reaction is N-acetyl-D-muramate 6-phosphate + H2O = N-acetyl-D-glucosamine 6-phosphate + (R)-lactate. Its pathway is amino-sugar metabolism; N-acetylmuramate degradation. Specifically catalyzes the cleavage of the D-lactyl ether substituent of MurNAc 6-phosphate, producing GlcNAc 6-phosphate and D-lactate. The sequence is that of N-acetylmuramic acid 6-phosphate etherase from Bacillus cereus (strain ATCC 10987 / NRS 248).